A 94-amino-acid polypeptide reads, in one-letter code: Protein EGG APPARATUS-1 (94 aa).

At 1-15 (MSSCPAIVNMKDDDG) the chain is on the cytoplasmic side. Residues 16 to 36 (IGAMGAAVAFAAMGVFGIYFL) form a helical; Signal-anchor for type II membrane protein membrane-spanning segment. Topologically, residues 37–94 (WPVVGPTSAGMMMKAPGAAGWVICRAVFEANPQLYFTILRTAGAAAAAATFAACSIAS) are extracellular.

Post-translationally, possible proteolysis of the C-terminal region from the predicted transmembrane domain to permit secretion and transport of the mature protein to the cell walls of the nucellus, allowing the spreading from the egg cell apparatus to the micropylar opening of the ovule. In terms of tissue distribution, expressed only in the egg apparatus, consisting of the egg cell and two synergids. Not detected in the central cell, antipodals, and nucellar and integumental cells.

It is found in the membrane. Its function is as follows. Involved in short-range signaling required for pollen tube attraction by the female gametophyte. Required for female fertility. This Zea mays (Maize) protein is Protein EGG APPARATUS-1 (Ea1).